We begin with the raw amino-acid sequence, 795 residues long: Phenylalanine--tRNA ligase beta subunit (795 aa).

Residues 39 to 148 enclose the tRNA-binding domain; the sequence is AGEFTGVKVG…EGTTLGADVR (110 aa). One can recognise a B5 domain in the interval 401–476; it reads PKANTVELRR…RIYGYNNIPN (76 aa). The Mg(2+) site is built by Asp-454, Asp-460, Glu-463, and Glu-464. Residues 701-794 form the FDX-ACB domain; the sequence is SKFPANRRDI…IGEKFSATLR (94 aa).

Belongs to the phenylalanyl-tRNA synthetase beta subunit family. Type 1 subfamily. As to quaternary structure, tetramer of two alpha and two beta subunits. It depends on Mg(2+) as a cofactor.

It localises to the cytoplasm. The enzyme catalyses tRNA(Phe) + L-phenylalanine + ATP = L-phenylalanyl-tRNA(Phe) + AMP + diphosphate + H(+). The polypeptide is Phenylalanine--tRNA ligase beta subunit (Aliivibrio fischeri (strain ATCC 700601 / ES114) (Vibrio fischeri)).